Reading from the N-terminus, the 313-residue chain is DNA-directed RNA polymerase subunit alpha (313 aa).

Positions 1–226 (MLEIEKPKIE…EHLQLFVNLN (226 aa)) are alpha N-terminal domain (alpha-NTD). Residues 243–313 (KEKLAEMPIE…MGLSLRKEEE (71 aa)) are alpha C-terminal domain (alpha-CTD).

The protein belongs to the RNA polymerase alpha chain family. In terms of assembly, homodimer. The RNAP catalytic core consists of 2 alpha, 1 beta, 1 beta' and 1 omega subunit. When a sigma factor is associated with the core the holoenzyme is formed, which can initiate transcription.

It carries out the reaction RNA(n) + a ribonucleoside 5'-triphosphate = RNA(n+1) + diphosphate. DNA-dependent RNA polymerase catalyzes the transcription of DNA into RNA using the four ribonucleoside triphosphates as substrates. This Carboxydothermus hydrogenoformans (strain ATCC BAA-161 / DSM 6008 / Z-2901) protein is DNA-directed RNA polymerase subunit alpha.